We begin with the raw amino-acid sequence, 158 residues long: Transcription elongation factor GreA (158 aa).

This sequence belongs to the GreA/GreB family.

Functionally, necessary for efficient RNA polymerase transcription elongation past template-encoded arresting sites. The arresting sites in DNA have the property of trapping a certain fraction of elongating RNA polymerases that pass through, resulting in locked ternary complexes. Cleavage of the nascent transcript by cleavage factors such as GreA or GreB allows the resumption of elongation from the new 3'terminus. GreA releases sequences of 2 to 3 nucleotides. The protein is Transcription elongation factor GreA of Sinorhizobium medicae (strain WSM419) (Ensifer medicae).